The following is a 97-amino-acid chain: DNA/RNA-binding protein Alba (97 aa).

Lys15 bears the N6-acetyllysine mark.

Belongs to the histone-like Alba family. Post-translationally, acetylated. Acetylation at Lys-15 decreases DNA-binding affinity.

It is found in the cytoplasm. It localises to the chromosome. Its function is as follows. Binds double-stranded DNA tightly but without sequence specificity. Involved in DNA compaction. The protein is DNA/RNA-binding protein Alba of Sulfolobus acidocaldarius (strain ATCC 33909 / DSM 639 / JCM 8929 / NBRC 15157 / NCIMB 11770).